A 291-amino-acid chain; its full sequence is MATLDDLKKRIASVKSTQKITKAMKMVAAAKLRRAQENAEKGRPYSEKMNNIILNLSSGISDKENAPKLLSGTGEDKVHLCIVLTSDRGLCGGFNTNIIKKAKTYFQKISDEGKTLKIITVGSKGYDQLKRVYKDAIVERISFKDSKTINYLDAEKVGKMIIENFEKEEFDVCTIFYNKFKNVITQIPQEQQIIPLKTSEAEENSSEDNYEFEPDEDEILSNLLPKNISTQIFKAMLENSASEQGSRMSAMDNATRNAGEMVDKLTIEYNRSRQAAITKELIEIISGAESL.

The protein belongs to the ATPase gamma chain family. As to quaternary structure, F-type ATPases have 2 components, CF(1) - the catalytic core - and CF(0) - the membrane proton channel. CF(1) has five subunits: alpha(3), beta(3), gamma(1), delta(1), epsilon(1). CF(0) has three main subunits: a, b and c.

The protein localises to the cell inner membrane. In terms of biological role, produces ATP from ADP in the presence of a proton gradient across the membrane. The gamma chain is believed to be important in regulating ATPase activity and the flow of protons through the CF(0) complex. The protein is ATP synthase gamma chain of Pelagibacter ubique (strain HTCC1062).